Reading from the N-terminus, the 368-residue chain is CST complex subunit STN1 (368 aa).

The tract at residues 1 to 185 (MQPGSSRCEE…KIYDQPFRSS (185 aa)) is interaction with CTC1. The OB DNA-binding region spans 57–155 (VDVLGTVVGV…EIHATAYYKV (99 aa)). 2 winged helix-turn-helix (wHTH) regions span residues 191–295 (EALS…YVTR) and 296–368 (EDKD…YTAF).

The protein belongs to the STN1 family. In terms of assembly, component of the CST complex, composed of TEN1/C17orf106, CTC1/C17orf68 and STN1; in the complex interacts directly with TEN1 and CTC1. Interacts with ACD/TPP1, POT1 and POLA1.

Its subcellular location is the nucleus. The protein resides in the chromosome. It localises to the telomere. Functionally, component of the CST complex proposed to act as a specialized replication factor promoting DNA replication under conditions of replication stress or natural replication barriers such as the telomere duplex. The CST complex binds single-stranded DNA with high affinity in a sequence-independent manner, while isolated subunits bind DNA with low affinity by themselves. Initially the CST complex has been proposed to protect telomeres from DNA degradation. However, the CST complex has been shown to be involved in several aspects of telomere replication. The CST complex inhibits telomerase and is involved in telomere length homeostasis; it is proposed to bind to newly telomerase-synthesized 3' overhangs and to terminate telomerase action implicating the association with the ACD:POT1 complex thus interfering with its telomerase stimulation activity. The CST complex is also proposed to be involved in fill-in synthesis of the telomeric C-strand probably implicating recruitment and activation of DNA polymerase alpha. The CST complex facilitates recovery from many forms of exogenous DNA damage; seems to be involved in the re-initiation of DNA replication at repaired forks and/or dormant origins. Required for efficicient replication of the duplex region of the telomere. Promotes efficient replication of lagging-strand telomeres. Promotes general replication start following replication-fork stalling implicating new origin firing. May be in involved in C-strand fill-in during late S/G2 phase independent of its role in telomere duplex replication. The polypeptide is CST complex subunit STN1 (Macaca fascicularis (Crab-eating macaque)).